The sequence spans 183 residues: Peptide deformylase (183 aa).

2 residues coordinate Fe cation: Cys-110 and His-153. Glu-154 is a catalytic residue. Residue His-157 coordinates Fe cation.

It belongs to the polypeptide deformylase family. Fe(2+) serves as cofactor.

It carries out the reaction N-terminal N-formyl-L-methionyl-[peptide] + H2O = N-terminal L-methionyl-[peptide] + formate. In terms of biological role, removes the formyl group from the N-terminal Met of newly synthesized proteins. Requires at least a dipeptide for an efficient rate of reaction. N-terminal L-methionine is a prerequisite for activity but the enzyme has broad specificity at other positions. The protein is Peptide deformylase of Shouchella clausii (strain KSM-K16) (Alkalihalobacillus clausii).